The sequence spans 583 residues: Probable lysosomal cobalamin transporter (583 aa).

The next 10 membrane-spanning stretches (helical) occupy residues 8 to 28 (LIWA…SVFI), 41 to 61 (VILT…LVPV), 95 to 115 (IVYY…IPFI), 145 to 165 (TVSF…VPVA), 188 to 208 (ALTF…VLYT), 312 to 332 (LLSG…MLLT), 347 to 367 (GYIL…VQSA), 375 to 395 (VIFT…ISAV), 418 to 438 (LLAT…TSMI), and 506 to 526 (FFGA…LLVM). The span at 541-552 (LDEDAEEAEEES) shows a compositional bias: acidic residues. The interval 541–562 (LDEDAEEAEEESLLANTRGRAE) is disordered.

The protein belongs to the LIMR family. LMBRD1 subfamily.

The protein resides in the lysosome membrane. Functionally, probable lysosomal cobalamin transporter. Required to export cobalamin from lysosomes allowing its conversion to cofactors. This chain is Probable lysosomal cobalamin transporter, found in Aspergillus oryzae (strain ATCC 42149 / RIB 40) (Yellow koji mold).